The following is a 614-amino-acid chain: Bifunctional enzyme CysN/CysC (614 aa).

Positions Met1 to Pro441 are sulfate adenylyltransferase. Positions Thr2–Met217 constitute a tr-type G domain. The tract at residues Gly11 to Ser18 is G1. Gly11–Ser18 serves as a coordination point for GTP. Residues Gly67–Asp71 form a G2 region. A G3 region spans residues Asp88 to Gly91. GTP is bound by residues Asp88–His92 and Asn143–Asp146. Residues Asn143–Asp146 form a G4 region. A G5 region spans residues Ser180 to Leu182. Residues Arg442 to Ser614 are adenylyl-sulfate kinase. Gly450–Ser457 provides a ligand contact to ATP. Ser524 serves as the catalytic Phosphoserine intermediate. The disordered stretch occupies residues Gly578–Arg597. Residues Lys587 to Arg597 are compositionally biased toward basic and acidic residues.

The protein in the C-terminal section; belongs to the APS kinase family. This sequence in the N-terminal section; belongs to the TRAFAC class translation factor GTPase superfamily. Classic translation factor GTPase family. CysN/NodQ subfamily. Heterodimer composed of CysD, the smaller subunit, and CysNC.

The catalysed reaction is sulfate + ATP + H(+) = adenosine 5'-phosphosulfate + diphosphate. It catalyses the reaction adenosine 5'-phosphosulfate + ATP = 3'-phosphoadenylyl sulfate + ADP + H(+). It participates in sulfur metabolism; hydrogen sulfide biosynthesis; sulfite from sulfate: step 1/3. Its pathway is sulfur metabolism; hydrogen sulfide biosynthesis; sulfite from sulfate: step 2/3. With CysD forms the ATP sulfurylase (ATPS) that catalyzes the adenylation of sulfate producing adenosine 5'-phosphosulfate (APS) and diphosphate, the first enzymatic step in sulfur assimilation pathway. APS synthesis involves the formation of a high-energy phosphoric-sulfuric acid anhydride bond driven by GTP hydrolysis by CysN coupled to ATP hydrolysis by CysD. Functionally, APS kinase catalyzes the synthesis of activated sulfate. This Mycobacterium tuberculosis (strain CDC 1551 / Oshkosh) protein is Bifunctional enzyme CysN/CysC (cysNC).